We begin with the raw amino-acid sequence, 513 residues long: Cytochrome P450 monooxygenase ARMGADRAFT_1018418 (513 aa).

The helical transmembrane segment at 1–21 (MTHASSAWFLAAVVIVTFIVV) threads the bilayer. Cys-435 contacts heme. N-linked (GlcNAc...) asparagine glycosylation is present at Asn-442.

It belongs to the cytochrome P450 family. It depends on heme as a cofactor.

Its subcellular location is the membrane. Its pathway is secondary metabolite biosynthesis. Cytochrome P450 monooxygenase, part of the gene cluster that mediates the biosynthesis of melleolides, a range of antifungal and phytotoxic polyketide derivatives composed of an orsellinic acid (OA) moiety esterified to various sesquiterpene alcohols. The first step in melleolides biosynthesis is performed by the delta(6)-protoilludene synthase PRO1 which catalyzes the cyclization of farnesyl diphosphate to protoilludene. The orsellinic acid synthase armB produces OA by condensing acetyl-CoA with 3 malonyl-CoA units in a three-round chain elongation reaction folowed by a C2-C7 ring closure. ArmB further catalyzes the trans-esterification of OA to the various sesquiterpene alcohols resulting from the hydroxylation of protoilludene. The melleolides cluster also includes 5 cytochrome P450 monooxygenases, 4 NAD(+)-dependent oxidoreductases, one flavin-dependent oxidoreductase, and one O-methyltransferase. The cytochrome P450 monooxygenases may be involved in protoilludene hydroxylation to elaborate melleolides with multiple alcohol groups, such as melleolide D, which carries alcohol functionalities at C-4, C-5, C-10, and C-13. The role of the NAD(+)-dependent enzymes remains unknown. Numerous melleolides, including arnamial, show 5'-O-methylation of the aromatic moiety which may be catalyzed by the methyltransferase encoded in the cluster. The flavin-dependent oxidoreductase might represent the dehydrogenase yielding the aldehyde in position 1 of arnamial and other melleolides. Finally, several halogenase localized outside of the cluster, are able to catalyze the transfer of a single chlorine atom to the melleolide backbone, resulting in a 6'-chloromelleolide product. The sequence is that of Cytochrome P450 monooxygenase ARMGADRAFT_1018418 from Armillaria gallica (Bulbous honey fungus).